Reading from the N-terminus, the 306-residue chain is UDP-3-O-acyl-N-acetylglucosamine deacetylase (306 aa).

Zn(2+) is bound by residues His-78, His-237, and Asp-241. Catalysis depends on His-264, which acts as the Proton donor.

It belongs to the LpxC family. The cofactor is Zn(2+).

The catalysed reaction is a UDP-3-O-[(3R)-3-hydroxyacyl]-N-acetyl-alpha-D-glucosamine + H2O = a UDP-3-O-[(3R)-3-hydroxyacyl]-alpha-D-glucosamine + acetate. It participates in glycolipid biosynthesis; lipid IV(A) biosynthesis; lipid IV(A) from (3R)-3-hydroxytetradecanoyl-[acyl-carrier-protein] and UDP-N-acetyl-alpha-D-glucosamine: step 2/6. Its function is as follows. Catalyzes the hydrolysis of UDP-3-O-myristoyl-N-acetylglucosamine to form UDP-3-O-myristoylglucosamine and acetate, the committed step in lipid A biosynthesis. This is UDP-3-O-acyl-N-acetylglucosamine deacetylase from Aromatoleum aromaticum (strain DSM 19018 / LMG 30748 / EbN1) (Azoarcus sp. (strain EbN1)).